Reading from the N-terminus, the 638-residue chain is Chaperone protein HtpG (638 aa).

The segment at 1-344 is a; substrate-binding; that stretch reads MQKKETLEFQ…SNDLPLNVSR (344 aa). The interval 345-560 is b; it reads EILQNNENIY…ENDITTQMSK (216 aa). The c stretch occupies residues 561–638; it reads LLISTGQESP…LLLSNIIRLN (78 aa).

This sequence belongs to the heat shock protein 90 family. Homodimer.

The protein resides in the cytoplasm. Functionally, molecular chaperone. Has ATPase activity. This chain is Chaperone protein HtpG, found in Wigglesworthia glossinidia brevipalpis.